The following is an 83-amino-acid chain: MAYKRVIQGKVVKKSGDKTVSLLVERKVVHPKYHKIVKRFKKYLVHDEHNKAKVGDIVTAVECRPISKRKSFRLKEIVQAGVE.

This sequence belongs to the universal ribosomal protein uS17 family. As to quaternary structure, part of the 30S ribosomal subunit.

Functionally, one of the primary rRNA binding proteins, it binds specifically to the 5'-end of 16S ribosomal RNA. The sequence is that of Small ribosomal subunit protein uS17 from Nitratiruptor sp. (strain SB155-2).